Here is a 121-residue protein sequence, read N- to C-terminus: Large ribosomal subunit protein uL14 (121 aa).

This sequence belongs to the universal ribosomal protein uL14 family. In terms of assembly, part of the 50S ribosomal subunit. Forms a cluster with proteins L3 and L19. In the 70S ribosome, L14 and L19 interact and together make contacts with the 16S rRNA in bridges B5 and B8.

Binds to 23S rRNA. Forms part of two intersubunit bridges in the 70S ribosome. In Prochlorococcus marinus (strain MIT 9301), this protein is Large ribosomal subunit protein uL14.